We begin with the raw amino-acid sequence, 314 residues long: Putative S-adenosyl-L-methionine-dependent methyltransferase MAP_4191c (314 aa).

Residues aspartate 138 and 167–168 (DL) each bind S-adenosyl-L-methionine.

Belongs to the UPF0677 family.

Functionally, exhibits S-adenosyl-L-methionine-dependent methyltransferase activity. This Mycolicibacterium paratuberculosis (strain ATCC BAA-968 / K-10) (Mycobacterium paratuberculosis) protein is Putative S-adenosyl-L-methionine-dependent methyltransferase MAP_4191c.